Consider the following 190-residue polypeptide: Potassium-transporting ATPase KdpC subunit (190 aa).

A helical membrane pass occupies residues 10 to 30; the sequence is TFLFLLLITGGVYPLLTTALG.

Belongs to the KdpC family. The system is composed of three essential subunits: KdpA, KdpB and KdpC.

Its subcellular location is the cell inner membrane. In terms of biological role, part of the high-affinity ATP-driven potassium transport (or Kdp) system, which catalyzes the hydrolysis of ATP coupled with the electrogenic transport of potassium into the cytoplasm. This subunit acts as a catalytic chaperone that increases the ATP-binding affinity of the ATP-hydrolyzing subunit KdpB by the formation of a transient KdpB/KdpC/ATP ternary complex. The protein is Potassium-transporting ATPase KdpC subunit of Escherichia coli O127:H6 (strain E2348/69 / EPEC).